The chain runs to 791 residues: 1-phosphatidylinositol 4,5-bisphosphate phosphodiesterase delta-4 (791 aa).

Residues 16–124 form the PH domain; the sequence is LLMQKGTMMR…WMQGLQLLVG (109 aa). The interval 26–53 is substrate binding; it reads KVRSKSWKKLRFFRLQDDGMTVWHARQA. 3 consecutive EF-hand domains span residues 134–169, 170–205, and 207–237; these read RLDQ…MNVE, MDQE…LTQR, and EVQE…EQKE. Positions 147, 149, 151, 153, 158, 183, 185, 187, 189, and 194 each coordinate Ca(2+). Positions 213-243 match the GBA motif; it reads EKFSSDGQKLTLLEFVDFLQEEQKEGERASD. The PI-PLC X-box domain maps to 290–435; it reads QDMTQPLNHY…LRGKILVKGK (146 aa). H305 is an active-site residue. Ca(2+) is bound by residues N306, E335, and D337. H350 is a catalytic residue. E384 is a Ca(2+) binding site. Substrate is bound by residues K433, K435, S551, and R578. One can recognise a PI-PLC Y-box domain in the interval 522 to 638; the sequence is LSALVVYLKA…GYVLKPDFLR (117 aa). Residues 638–765 enclose the C2 domain; the sequence is RDAQSSFHPE…QGYRHIHLLS (128 aa). Residues I679, D681, N705, D734, Y735, and D736 each contribute to the Ca(2+) site. Residues 760–763 carry the PDZ-binding motif; it reads HIHL.

Interacts with GRIP1. Interacts (via GBA motif) with guanine nucleotide-binding protein G(i) alpha subunit GNAI3 (inactive GDP-bound form); low-affinity interaction. It depends on Ca(2+) as a cofactor.

Its subcellular location is the membrane. It is found in the nucleus. The protein resides in the cytoplasm. It localises to the endoplasmic reticulum. It catalyses the reaction a 1,2-diacyl-sn-glycero-3-phospho-(1D-myo-inositol-4,5-bisphosphate) + H2O = 1D-myo-inositol 1,4,5-trisphosphate + a 1,2-diacyl-sn-glycerol + H(+). The catalysed reaction is a 1,2-diacyl-sn-glycero-3-phospho-(1D-myo-inositol) + H2O = 1D-myo-inositol 1-phosphate + a 1,2-diacyl-sn-glycerol + H(+). Its function is as follows. Hydrolyzes the phosphatidylinositol 4,5-bisphosphate (PIP2) to generate 2 second messenger molecules diacylglycerol (DAG) and inositol 1,4,5-trisphosphate (IP3). DAG mediates the activation of protein kinase C (PKC), while IP3 releases Ca(2+) from intracellular stores. Required for acrosome reaction in sperm during fertilization, probably by acting as an important enzyme for intracellular Ca(2+) mobilization in the zona pellucida-induced acrosome reaction. May play a role in cell growth. Modulates the liver regeneration in cooperation with nuclear PKC. Overexpression up-regulates the Erk signaling pathway and proliferation. This chain is 1-phosphatidylinositol 4,5-bisphosphate phosphodiesterase delta-4 (PLCD4), found in Bos taurus (Bovine).